The chain runs to 1015 residues: GTPase-activating Rap/Ran-GAP domain-like protein 3 (1015 aa).

One can recognise a Rap-GAP domain in the interval 200–416 (LLVLEEQEGS…RTLDMLIRSL (217 aa)). Residues 498–812 (PYDIVCGDSW…QLTASRSDIY (315 aa)) form the CNH domain. Disordered stretches follow at residues 821–842 (SASNCSSRDTSSQSSPQTPTGY) and 924–1004 (ELLG…FTFS). The segment covering 823-835 (SNCSSRDTSSQSS) has biased composition (low complexity). Basic and acidic residues predominate over residues 949–959 (KNKEEEQKRTA).

Belongs to the GARNL3 family.

The chain is GTPase-activating Rap/Ran-GAP domain-like protein 3 (garnl3) from Danio rerio (Zebrafish).